Here is a 545-residue protein sequence, read N- to C-terminus: Capsular polysaccharide phosphotransferase SacB (545 aa).

Belongs to the stealth family.

May be the polymerase that links individual UDP-N-acetyl-D-mannosamine monomers. In serotype A the capsule is composed of repeated units of (alpha 1-6)-linked N-acetyl-D-mannosamine-1-phosphate. In Neisseria meningitidis serogroup A, this protein is Capsular polysaccharide phosphotransferase SacB (sacB).